The sequence spans 159 residues: 3-dehydroquinate dehydratase (159 aa).

Residue tyrosine 22 is the Proton acceptor of the active site. Residues asparagine 73, histidine 79, and aspartate 86 each contribute to the substrate site. Residue histidine 99 is the Proton donor of the active site. Substrate contacts are provided by residues 100–101 and arginine 110; that span reads IS.

This sequence belongs to the type-II 3-dehydroquinase family. As to quaternary structure, homododecamer.

It carries out the reaction 3-dehydroquinate = 3-dehydroshikimate + H2O. It participates in metabolic intermediate biosynthesis; chorismate biosynthesis; chorismate from D-erythrose 4-phosphate and phosphoenolpyruvate: step 3/7. Its function is as follows. Catalyzes a trans-dehydration via an enolate intermediate. This Campylobacter jejuni subsp. jejuni serotype O:6 (strain 81116 / NCTC 11828) protein is 3-dehydroquinate dehydratase.